Here is a 396-residue protein sequence, read N- to C-terminus: NADH-quinone oxidoreductase subunit D (396 aa).

The protein belongs to the complex I 49 kDa subunit family. In terms of assembly, NDH-1 is composed of 14 different subunits. Subunits NuoB, C, D, E, F, and G constitute the peripheral sector of the complex.

It is found in the cell inner membrane. It catalyses the reaction a quinone + NADH + 5 H(+)(in) = a quinol + NAD(+) + 4 H(+)(out). In terms of biological role, NDH-1 shuttles electrons from NADH, via FMN and iron-sulfur (Fe-S) centers, to quinones in the respiratory chain. The immediate electron acceptor for the enzyme in this species is believed to be ubiquinone. Couples the redox reaction to proton translocation (for every two electrons transferred, four hydrogen ions are translocated across the cytoplasmic membrane), and thus conserves the redox energy in a proton gradient. The protein is NADH-quinone oxidoreductase subunit D of Brucella abortus (strain S19).